The primary structure comprises 382 residues: MKGISVLGATGSIGTQTLDVLANHRDKFRLVAMSVGKNLTLAEEQIHQFKPPLVSVMTDEDRKTLASKVPEGTRVVCGEEGLIEVATAEKAEILVNAVIGSVGLAPTLAAIEAKKTIALANKETLVTAGHLVTEKAREHGVKLLPVDSEHSAIFQALQGERMDRLHRIIITASGGSFRDKSRDELNGVTVEDALKHPNWSMGAKITIDSATMMNKGLEVIEAHWLFNLPYEKIDVLLHKESIIHSMVEFVDRSVIAQLGTPDMRVPIQYALSYPDRLEFHEGQQLNLWEVGKLHFAPLDMERFRCMAFAYESGKQGGTMPTVLNAANEEAVELFLNNQLSFLGIEDVIEKALERHERIDSPSLADILHVDQETRAFVHSLIK.

NADPH contacts are provided by T10, G11, S12, I13, G36, K37, N38, and N121. K122 provides a ligand contact to 1-deoxy-D-xylulose 5-phosphate. E123 contacts NADPH. D147 contacts Mn(2+). Residues S148, E149, S173, and H196 each coordinate 1-deoxy-D-xylulose 5-phosphate. A Mn(2+)-binding site is contributed by E149. G202 contacts NADPH. S209, N214, K215, and E218 together coordinate 1-deoxy-D-xylulose 5-phosphate. E218 lines the Mn(2+) pocket.

The protein belongs to the DXR family. Requires Mg(2+) as cofactor. The cofactor is Mn(2+).

The enzyme catalyses 2-C-methyl-D-erythritol 4-phosphate + NADP(+) = 1-deoxy-D-xylulose 5-phosphate + NADPH + H(+). The protein operates within isoprenoid biosynthesis; isopentenyl diphosphate biosynthesis via DXP pathway; isopentenyl diphosphate from 1-deoxy-D-xylulose 5-phosphate: step 1/6. Functionally, catalyzes the NADPH-dependent rearrangement and reduction of 1-deoxy-D-xylulose-5-phosphate (DXP) to 2-C-methyl-D-erythritol 4-phosphate (MEP). The sequence is that of 1-deoxy-D-xylulose 5-phosphate reductoisomerase from Halalkalibacterium halodurans (strain ATCC BAA-125 / DSM 18197 / FERM 7344 / JCM 9153 / C-125) (Bacillus halodurans).